The sequence spans 902 residues: Desmocollin-2 (902 aa).

Positions 1–27 are cleaved as a signal peptide; sequence MAAVGSMRSGSPAFGLGHLLTLAILAL. Positions 28 to 135 are excised as a propeptide; that stretch reads ASDACKEVVL…TEKVLSRAKR (108 aa). Cadherin domains lie at 136-243, 244-355, 356-471, 472-579, and 580-694; these read RWAP…YPIF, TQKL…LPTF, TRTT…GPEC, IPPM…FIPK, and QTVV…RLGP. Topologically, residues 136–694 are extracellular; sequence RWAPIPCSML…TGYADVRLGP (559 aa). Asparagine 166 carries an N-linked (GlcNAc...) asparagine glycan. Residues asparagine 392, asparagine 546, and asparagine 629 are each glycosylated (N-linked (GlcNAc...) asparagine). The chain crosses the membrane as a helical span at residues 695 to 715; sequence WAILAILLGIALLFCILFTLV. Residues 716–902 lie on the Cytoplasmic side of the membrane; the sequence is CSVSRASKQQ…RTLAEVCAKR (187 aa). 3 positions are modified to phosphoserine: serine 865, serine 869, and serine 874.

As to quaternary structure, interacts with DSP, PKP2 and JUP. Interacts with DSG3; the interaction may limit the interaction of DSC3 with p38MAPK family members and therefore repress p38MAPK signaling activation. Expressed in intestinal epithelial cells (at protein level). Expressed in the heart. Expressed in tongue, bladder, stomach, liver, kidney, and lung.

The protein localises to the cell membrane. It is found in the cell junction. The protein resides in the desmosome. Functionally, a component of desmosome cell-cell junctions which are required for positive regulation of cellular adhesion. Promotes timely incorporation of DSG2 into desmosome intercellular junctions and promotes interaction of desmosome cell junctions with intermediate filament cytokeratin, via modulation of DSP phosphorylation. Plays an important role in desmosome-mediated maintenance of intestinal epithelial cell intercellular adhesion strength and barrier function. Positively regulates wound healing of intestinal mucosa via promotion of epithelial cell migration, and also plays a role in mechanotransduction of force between intestinal epithelial cells and extracellular matrix. May contribute to epidermal cell positioning (stratification) by mediating differential adhesiveness between cells that express different isoforms. May promote p38MAPK signaling activation that facilitates keratinocyte migration. The sequence is that of Desmocollin-2 (Dsc2) from Mus musculus (Mouse).